The chain runs to 228 residues: 2-C-methyl-D-erythritol 4-phosphate cytidylyltransferase (228 aa).

The protein belongs to the IspD/TarI cytidylyltransferase family. IspD subfamily.

It catalyses the reaction 2-C-methyl-D-erythritol 4-phosphate + CTP + H(+) = 4-CDP-2-C-methyl-D-erythritol + diphosphate. The protein operates within isoprenoid biosynthesis; isopentenyl diphosphate biosynthesis via DXP pathway; isopentenyl diphosphate from 1-deoxy-D-xylulose 5-phosphate: step 2/6. Catalyzes the formation of 4-diphosphocytidyl-2-C-methyl-D-erythritol from CTP and 2-C-methyl-D-erythritol 4-phosphate (MEP). This Nostoc sp. (strain PCC 7120 / SAG 25.82 / UTEX 2576) protein is 2-C-methyl-D-erythritol 4-phosphate cytidylyltransferase.